The following is a 243-amino-acid chain: Aliphatic sulfonates import ATP-binding protein SsuB (243 aa).

Positions 11 to 230 constitute an ABC transporter domain; the sequence is ATVRGLRKSY…RTHPSFASYT (220 aa). An ATP-binding site is contributed by 43-50; it reads GRSGSGKS.

This sequence belongs to the ABC transporter superfamily. Aliphatic sulfonates importer (TC 3.A.1.17.2) family. The complex is composed of two ATP-binding proteins (SsuB), two transmembrane proteins (SsuC) and a solute-binding protein (SsuA).

Its subcellular location is the cell membrane. It carries out the reaction ATP + H2O + aliphatic sulfonate-[sulfonate-binding protein]Side 1 = ADP + phosphate + aliphatic sulfonateSide 2 + [sulfonate-binding protein]Side 1.. In terms of biological role, part of the ABC transporter complex SsuABC involved in aliphatic sulfonates import. Responsible for energy coupling to the transport system. Is also involved in taurine transport. Seems to not be involved in long chain aliphatic sulfonates transport (chain length of eight carbon atoms or more). The polypeptide is Aliphatic sulfonates import ATP-binding protein SsuB (Corynebacterium glutamicum (strain ATCC 13032 / DSM 20300 / JCM 1318 / BCRC 11384 / CCUG 27702 / LMG 3730 / NBRC 12168 / NCIMB 10025 / NRRL B-2784 / 534)).